We begin with the raw amino-acid sequence, 436 residues long: 3-ketoacyl-CoA thiolase (436 aa).

The active-site Acyl-thioester intermediate is the cysteine 99. Active-site proton acceptor residues include histidine 392 and cysteine 422.

The protein belongs to the thiolase-like superfamily. Thiolase family. As to quaternary structure, heterotetramer of two alpha chains (FadJ) and two beta chains (FadI).

Its subcellular location is the cytoplasm. It carries out the reaction an acyl-CoA + acetyl-CoA = a 3-oxoacyl-CoA + CoA. It participates in lipid metabolism; fatty acid beta-oxidation. Functionally, catalyzes the final step of fatty acid oxidation in which acetyl-CoA is released and the CoA ester of a fatty acid two carbons shorter is formed. In Shewanella piezotolerans (strain WP3 / JCM 13877), this protein is 3-ketoacyl-CoA thiolase.